A 421-amino-acid polypeptide reads, in one-letter code: Protein HOMOLOG OF MAMMALIAN LYST-INTERACTING PROTEIN 5 (421 aa).

The residue at position 2 (serine 2) is an N-acetylserine. A disordered region spans residues 146-374; that stretch reads IKEGRKPTPG…KYHYDSSYQP (229 aa). The segment covering 165-185 has biased composition (polar residues); the sequence is SIPSSGPSGSYDHSASDTNTT. Positions 188 to 207 are enriched in basic and acidic residues; the sequence is HRTELDPPHDSNDDSSHHQF. Residues 245–258 are compositionally biased toward pro residues; the sequence is LPPPTGPSDSPYPH. The span at 278–293 shows a compositional bias: polar residues; sequence NYSSHEPSPNSLPNFQ. Composition is skewed to low complexity over residues 294–308 and 317–337; these read SYPS…STSP and PEPY…SFSS.

It belongs to the VTA1 family. Homodimer. Interacts with SKD1/VPS4, VPS60-1, CHMP1A and CHMP1B. Binds to PROS/At4g24370. Interacts with MPK6 and MPK3. Post-translationally, phosphorylated by activated MPK6 and MPK3, this activation is required to trigger multivesicular bodies (MVBs) trafficking upon plant infection.

The protein localises to the cytoplasm. Its subcellular location is the endosome membrane. The protein resides in the nucleus. It localises to the endosome. It is found in the multivesicular body. In terms of biological role, involved in the endosomal multivesicular bodies (MVB) pathway. MVBs contain intraluminal vesicles (ILVs) that are generated by invagination and scission from the limiting membrane of the endosome and are delivered to lysosomes enabling degradation of membrane proteins. Thought to be a cofactor of SKD1/VPS4, which catalyzes the disassembly of membrane-associated ESCRT-III. Target of pathogen-responsive mitogen-activated protein kinases (MPKs) that plays a critical role in plant basal resistance to Pseudomonas syringae in a SKD1-dependent manner by promoting multivesicular bodies (MVBs) trafficking upon plant infection. This Arabidopsis thaliana (Mouse-ear cress) protein is Protein HOMOLOG OF MAMMALIAN LYST-INTERACTING PROTEIN 5.